The primary structure comprises 491 residues: MASTTCTRFTDEYQLYEELGKGAFSVVRRCMKISTGQEYAAKIINTKKLSARDHQKLEREARICRLLKHANIVRLHDSISEEGVHYLVFDLVTGGELFEDIVAREYYSEADASHCIQQILEAVLHCHQMGVVHRDLKPENLLLASKLKGAAVKLADFGLAIEVQGDQQAWFGFAGTPGYLSPEVLRKEPYGKPVDMWACGVILYILLVGYPPFWDEDQHRLYQQIKAGAYDFPSPEWDTVTPEAKDLINKMLTINPAKRITAAEALKHPWICQRSTVASMMHRQETVECLKKFNARRKLKGAILTTMLATRNFSSKNPYKKPDGVKEPQTTVIHNPTDGNKESSESTNTTIEDEDIKARKQEIIKVTELLIEAINNGEFEAYTKICDPGLTSFEPEALGNLVEGTDFHRFYFENSLSKGHKPIHTILLNPHVHLIGEDAACIAYIRLTQYMDVNNMPRTMQSEETRVWHRRDGKWQNIHFHRSGSPTVPTK.

In terms of domain architecture, Protein kinase spans 13–271 (YQLYEELGKG…AAEALKHPWI (259 aa)). ATP-binding positions include 19-27 (LGKGAFSVV) and Lys-42. The active-site Proton acceptor is Asp-135. The residue at position 286 (Thr-286) is a Phosphothreonine. Ser-314 carries the phosphoserine modification. The tract at residues 315-354 (SKNPYKKPDGVKEPQTTVIHNPTDGNKESSESTNTTIEDE) is disordered. Residues 328 to 338 (PQTTVIHNPTD) are compositionally biased toward polar residues. A Phosphothreonine modification is found at Thr-350.

The protein belongs to the protein kinase superfamily. CAMK Ser/Thr protein kinase family. CaMK subfamily. CAMK2 is composed of four different chains: alpha, beta, gamma, and delta. The different isoforms assemble into homo- or heteromultimeric holoenzymes composed of 8 to 12 subunits. First detected at the 18-somite stage where expression is restricted to somite boundaries. At 24 hpf, expression is elevated in epidermal tissue and in the hatching gland. After 24 hpf, expression dimishes, but persists at low levels along the dorsal trunk. At 48 hpf, expression is restricted at a low level to the forebrain. At 72 hpf, weak expression reappears along the entire dorsal trunk in discrete cell bodies.

It carries out the reaction L-seryl-[protein] + ATP = O-phospho-L-seryl-[protein] + ADP + H(+). The catalysed reaction is L-threonyl-[protein] + ATP = O-phospho-L-threonyl-[protein] + ADP + H(+). With respect to regulation, autophosphorylation of CAMK2 plays an important role in the regulation of the kinase activity. CaM-kinase II (CAMK2) is a prominent kinase in the central nervous system. This chain is Calcium/calmodulin-dependent protein kinase type II delta 1 chain, found in Danio rerio (Zebrafish).